We begin with the raw amino-acid sequence, 186 residues long: Mitoferrin-2A (186 aa).

The stretch at 75–163 (SNVTTHMLAG…FACYEKLKKT (89 aa)) is one Solcar repeat. A run of 3 helical transmembrane segments spans residues 77 to 96 (VTTHMLAGAVAGVMEHCLMY), 137 to 157 (RGLNVTATGAGPAHALYFACY), and 172 to 185 (GNSHIANGTDYSCP).

This sequence belongs to the mitochondrial carrier (TC 2.A.29) family.

The protein resides in the mitochondrion inner membrane. It carries out the reaction Fe(2+)(in) = Fe(2+)(out). In terms of biological role, mitochondrial iron transporter that mediates iron uptake. Probably required for heme synthesis of hemoproteins and Fe-S cluster assembly in non-erythroid cells. The protein is Mitoferrin-2A (slc25a28-a) of Xenopus laevis (African clawed frog).